We begin with the raw amino-acid sequence, 426 residues long: Proline--tRNA ligase (426 aa).

This sequence belongs to the class-II aminoacyl-tRNA synthetase family. ProS type 2 subfamily. In terms of assembly, homodimer.

It localises to the cytoplasm. It carries out the reaction tRNA(Pro) + L-proline + ATP = L-prolyl-tRNA(Pro) + AMP + diphosphate. Its function is as follows. Catalyzes the attachment of proline to tRNA(Pro) in a two-step reaction: proline is first activated by ATP to form Pro-AMP and then transferred to the acceptor end of tRNA(Pro). The polypeptide is Proline--tRNA ligase (Anaplasma phagocytophilum (strain HZ)).